The chain runs to 369 residues: Anhydro-N-acetylmuramic acid kinase (369 aa).

Residue 12 to 19 (GTSMDGVD) coordinates ATP.

This sequence belongs to the anhydro-N-acetylmuramic acid kinase family.

The enzyme catalyses 1,6-anhydro-N-acetyl-beta-muramate + ATP + H2O = N-acetyl-D-muramate 6-phosphate + ADP + H(+). Its pathway is amino-sugar metabolism; 1,6-anhydro-N-acetylmuramate degradation. The protein operates within cell wall biogenesis; peptidoglycan recycling. Its function is as follows. Catalyzes the specific phosphorylation of 1,6-anhydro-N-acetylmuramic acid (anhMurNAc) with the simultaneous cleavage of the 1,6-anhydro ring, generating MurNAc-6-P. Is required for the utilization of anhMurNAc either imported from the medium or derived from its own cell wall murein, and thus plays a role in cell wall recycling. The chain is Anhydro-N-acetylmuramic acid kinase from Shewanella sp. (strain MR-4).